Consider the following 353-residue polypeptide: MLYSLLYGYFNINLFQYLTFRAGLGFFIAFFLTLFLMPKFILWAKAKKANQPISSFVPSHQNKKDTPTMGGIVFVFATIVASVLCASLGNLYVLLGMIVLVGFSFVGFKDDYTKINQQNNAGMSVKMKFGMLFVLSLVVSVLLSLKGLDTFLYAPFLKNPLFEMPTILAVGFWVLVFLSTSNAVNLTDGLDGLASVPSIFTLLSLSIFVYVAGNAEFSKYLLYPKVIDVGELFVISLALVGSLFGFLWYNCNPASVFMGDSGSLALGGFIAYNAIVSHNEILLVLMGLIFVVETLSVILQVGSYKTRKKRLFLMAPIHHHFEQKGWAENKVIVRFWIISMLSNLVALLSLKVR.

Helical transmembrane passes span 24 to 44 (LGFF…ILWA), 66 to 86 (TPTM…VLCA), 88 to 108 (LGNL…FVGF), 129 to 149 (FGML…KGLD), 160 to 180 (PLFE…FLST), 192 to 212 (GLAS…VYVA), 229 to 249 (VGEL…FLWY), 256 to 276 (VFMG…NAIV), 281 to 301 (ILLV…ILQV), and 330 to 350 (KVIV…LLSL).

It belongs to the glycosyltransferase 4 family. MraY subfamily. The cofactor is Mg(2+).

The protein localises to the cell inner membrane. The catalysed reaction is UDP-N-acetyl-alpha-D-muramoyl-L-alanyl-gamma-D-glutamyl-meso-2,6-diaminopimeloyl-D-alanyl-D-alanine + di-trans,octa-cis-undecaprenyl phosphate = di-trans,octa-cis-undecaprenyl diphospho-N-acetyl-alpha-D-muramoyl-L-alanyl-D-glutamyl-meso-2,6-diaminopimeloyl-D-alanyl-D-alanine + UMP. It participates in cell wall biogenesis; peptidoglycan biosynthesis. Catalyzes the initial step of the lipid cycle reactions in the biosynthesis of the cell wall peptidoglycan: transfers peptidoglycan precursor phospho-MurNAc-pentapeptide from UDP-MurNAc-pentapeptide onto the lipid carrier undecaprenyl phosphate, yielding undecaprenyl-pyrophosphoryl-MurNAc-pentapeptide, known as lipid I. The chain is Phospho-N-acetylmuramoyl-pentapeptide-transferase from Helicobacter pylori (strain Shi470).